The primary structure comprises 152 residues: Endoribonuclease YbeY (152 aa).

Zn(2+) contacts are provided by His114, His118, and His124.

The protein belongs to the endoribonuclease YbeY family. Zn(2+) serves as cofactor.

It is found in the cytoplasm. In terms of biological role, single strand-specific metallo-endoribonuclease involved in late-stage 70S ribosome quality control and in maturation of the 3' terminus of the 16S rRNA. The protein is Endoribonuclease YbeY of Coxiella burnetii (strain CbuK_Q154) (Coxiella burnetii (strain Q154)).